The primary structure comprises 731 residues: Endopolyphosphatase (731 aa).

The Cytoplasmic segment spans residues 1 to 4 (MSLS). A helical; Signal-anchor for type II membrane protein transmembrane segment spans residues 5–25 (RCILGLACLWHGVIASPLGAV). Residues 26-731 (PSNIPIATDL…VEKEDLKKFT (706 aa)) are Vacuolar-facing. N-linked (GlcNAc...) asparagine glycosylation occurs at asparagine 106. The tract at residues 375-403 (KLQPPPTDSKNSGQLKKGKKGRKGKKKKP) is disordered. Over residues 390–402 (KKGKKGRKGKKKK) the composition is skewed to basic residues. N-linked (GlcNAc...) asparagine glycosylation occurs at asparagine 433. A disordered region spans residues 456–522 (EQNDRQKHLD…PPGPAYSPQP (67 aa)). Basic and acidic residues-rich tracts occupy residues 457 to 474 (QNDR…PSHM) and 492 to 501 (GGDSKPKKPD). The segment covering 505–519 (PHPPAKSSPPGPAYS) has biased composition (pro residues). N-linked (GlcNAc...) asparagine glycosylation is found at asparagine 534 and asparagine 540. A disordered region spans residues 626–706 (AKSIDVSYES…HKKKKGKKRQ (81 aa)). Over residues 636–686 (AAEEEEEEEEEEEEDLFEEVEETDEEEEQEDDDLSDGEEVDDDSDEDELET) the composition is skewed to acidic residues. Over residues 691–706 (KHDKKKHKKKKGKKRQ) the composition is skewed to basic residues.

The protein belongs to the endopolyphosphatase PPN1 family. The cofactor is a divalent metal cation. Post-translationally, processing by proteases in the vacuole may be required for activation.

The protein localises to the vacuole membrane. It carries out the reaction [phosphate](n+1) + n H2O = (n+1) phosphate + n H(+). Functionally, catalyzes the hydrolysis of inorganic polyphosphate (polyP) chains of many hundreds of phosphate residues into shorter lengths. The protein is Endopolyphosphatase (epp-1) of Neurospora crassa (strain ATCC 24698 / 74-OR23-1A / CBS 708.71 / DSM 1257 / FGSC 987).